A 162-amino-acid polypeptide reads, in one-letter code: UPF0114 protein SO_3997 (162 aa).

Helical transmembrane passes span 10-32 (YASR…GLGI), 53-75 (LVLV…MVMF), and 136-156 (IMWY…MGYL).

It belongs to the UPF0114 family.

Its subcellular location is the cell membrane. The polypeptide is UPF0114 protein SO_3997 (Shewanella oneidensis (strain ATCC 700550 / JCM 31522 / CIP 106686 / LMG 19005 / NCIMB 14063 / MR-1)).